Consider the following 566-residue polypeptide: Chondroitin sulfate proteoglycan 5 (566 aa).

The N-terminal stretch at 1–30 is a signal peptide; it reads MGRAGGGGPGRGPPPLLLFLGAALVLASGA. Residues 31–423 lie on the Extracellular side of the membrane; it reads VPAREAGSAV…SIITDFQVMC (393 aa). An O-linked (Xyl...) (chondroitin sulfate) serine glycan is attached at Ser-38. Residues 39–82 form a disordered region; that stretch reads AVEAEELVKGSPAWEPPANDTREEAGPPAAGEDEASWTAPGGEL. N-linked (GlcNAc...) asparagine glycosylation occurs at Asn-57. Ser-117 carries an O-linked (Xyl...) (chondroitin sulfate) serine glycan. Disordered stretches follow at residues 143–202, 215–248, and 262–354; these read IPEA…LEPQ, GLDG…TPSW, and ESDF…ASSE. Ser-165 carries an O-linked (GalNAc...) serine glycan. Positions 264–301 are interaction with TNC and TNR; it reads DFYPTTSFYDDLDEEEEEEEDDKDAVGGGDLEDENELL. Over residues 273–286 the composition is skewed to acidic residues; the sequence is DDLDEEEEEEEDDK. One can recognise an EGF-like domain in the interval 371–413; it reads RSVCDLFPSYCHNGGQCYLVENIGAFCRCNTQDYIWHKGMRCE. 3 disulfides stabilise this stretch: Cys-374-Cys-387, Cys-381-Cys-397, and Cys-399-Cys-412. A helical membrane pass occupies residues 424-444; that stretch reads VAVGSAALVLLLLFMMTVFFA. Residues 442–460 are interaction with GOPC; sequence FFAKKLYLLKTENTKLRRT. Topologically, residues 445–566 are cytoplasmic; sequence KKLYLLKTEN…DVNCLQNNLT (122 aa). Ser-467, Ser-475, Ser-483, and Ser-543 each carry phosphoserine.

Binds TNR and probably TNC. Interacts with ERBB3 and GOPC. Interacts with MDK; this interaction is independent of the presence of chondroitin sulfate chains and promotes elongation of oligodendroglial precursor-like cells. N-glycosylated. Post-translationally, O-glycosylated; contains chondroitin sulfate glycans. Part-time proteoglycan, expressed in part as a proteoglycan exhibiting chondroitin sulfate glycans and in part as a non-proteoglycan form. The relative amount of both forms depends on tissues and tissue maturation. In terms of processing, phosphorylated; in intracellular and extracellular parts. As to expression, detected in cerebrospinal fluid (at protein level). Detected in urine (at protein level). Expressed in brain (at protein level).

It localises to the cell membrane. The protein resides in the synaptic cell membrane. The protein localises to the endoplasmic reticulum membrane. Its subcellular location is the golgi apparatus membrane. It is found in the cell surface. It localises to the secreted. Functionally, may function as a growth and differentiation factor involved in neuritogenesis. May induce ERBB3 activation. This Homo sapiens (Human) protein is Chondroitin sulfate proteoglycan 5 (CSPG5).